Here is a 525-residue protein sequence, read N- to C-terminus: GMP synthase [glutamine-hydrolyzing] (525 aa).

One can recognise a Glutamine amidotransferase type-1 domain in the interval 8–207; sequence KILILDFGSQ…ALDICGCKAN (200 aa). The active-site Nucleophile is the C85. Active-site residues include H181 and E183. Positions 208–400 constitute a GMPS ATP-PPase domain; the sequence is WKPSSIIEDA…LGLPYNMLYR (193 aa). Position 235 to 241 (235 to 241) interacts with ATP; sequence SGGVDSS.

As to quaternary structure, homodimer.

It catalyses the reaction XMP + L-glutamine + ATP + H2O = GMP + L-glutamate + AMP + diphosphate + 2 H(+). Its pathway is purine metabolism; GMP biosynthesis; GMP from XMP (L-Gln route): step 1/1. Functionally, catalyzes the synthesis of GMP from XMP. The protein is GMP synthase [glutamine-hydrolyzing] of Shewanella frigidimarina (strain NCIMB 400).